We begin with the raw amino-acid sequence, 711 residues long: C-Jun-amino-terminal kinase-interacting protein 1 (711 aa).

Residues 1–27 (MAERESGGLGGGAASPPAASPFLGLHI) form a disordered region. Positions 14–25 (ASPPAASPFLGL) are enriched in low complexity. A phosphoserine mark is found at Ser-15, Ser-29, and Ser-40. Positions 78–371 (AGGGGAGSRL…PPRASLSSDT (294 aa)) are disordered. Thr-103 carries the post-translational modification Phosphothreonine; by MAPK8, MAPK9 and MAPK10. A compositionally biased stretch (acidic residues) spans 105–116 (GAEDDEEDDDEE). The JNK-binding domain (JBD) stretch occupies residues 127-285 (PKAESGQEPA…EATEEIYLTP (159 aa)). The span at 139 to 149 (GQGQSQGQSQG) shows a compositional bias: low complexity. At Ser-152 the chain carries Phosphoserine. A minimal inhibitory domain (MID) region spans residues 157–176 (RPKRPTTLNLFPQVPRSQDT). Residues 162 to 182 (TTLNLFPQVPRSQDTLNNNSL) are compositionally biased toward polar residues. Phosphoserine is present on residues Ser-181, Ser-187, Ser-193, Ser-195, and Ser-196. Polar residues predominate over residues 194-204 (RSSSPLKTGEQ). Thr-205 bears the Phosphothreonine; by MAPK8, MAPK9 and MAPK10 mark. Position 214 is a phosphoserine (Ser-214). Residues 228-244 (DRGTSTDSPCRRSTATQ) are compositionally biased toward polar residues. Positions 267–277 (IHYQADVRLEA) are enriched in basic and acidic residues. Residues 283–471 (LTPVQRPPDA…NVFMSGRSRS (189 aa)) form an interaction with MAP3K7 region. Phosphoserine occurs at positions 311, 328, 330, 340, 355, 366, 369, 407, and 409. 2 consecutive short sequence motifs (D-box) follow at residues 353–360 (RGSLGEPP) and 364–372 (RASLSSDTS). Thr-411 is subject to Phosphothreonine. Residues 429–451 (EEYEEAPRPQPPACLSEDSTPDE) form a disordered region. Residues Ser-444 and Ser-447 each carry the phosphoserine modification. At Thr-448 the chain carries Phosphothreonine. Residues Ser-469, Ser-471, Ser-472, and Ser-473 each carry the phosphoserine modification. An interaction with VRK2 region spans residues 471–660 (SSSAESFGLF…PKNNKYFGFI (190 aa)). One can recognise an SH3 domain in the interval 488-549 (EQEQTHRAIF…PAYYAIEVTK (62 aa)). The 140-residue stretch at 561-700 (SDWVDQFRVK…FQQFYKQFVE (140 aa)) folds into the PID domain.

It belongs to the JIP scaffold family. In terms of assembly, forms homo- or heterooligomeric complexes. Binds specific components of the JNK signaling pathway namely, MAPK8/JNK1, MAPK9/JNK2, MAPK10/JNK3, MAP2K7/MKK7, MAP3K11/MLK3 and DLK1. Also binds the proline-rich domain-containing splice variant of apolipoprotein E receptor 2 (ApoER2). Interacts, via the PID domain, with ARHGEF28. Binds the cytoplasmic tails of LRP1 and LRP2 (Megalin). Binds the TPR motif-containing C-terminal of KNS2, then the pre-assembled MAPK8IP1 scaffolding complexes are transported as a cargo of kinesin, to the required subcellular location. Interacts with the cytoplasmic domain of APP. Interacts with DCLK2. Interacts with MAP3K7/TAK1. Interacts with isoform 1 and isoform 2 of VRK2. Found in a complex with SH3RF1, RAC1, MAP3K11/MLK3, MAP2K7/MKK7 and MAPK8/JNK1. Found in a complex with SH3RF1, RAC2, MAP3K7/TAK1, MAP2K7/MKK7, MAPK8/JNK1 and MAPK9/JNK2. Interacts with SH3RF2. Post-translationally, phosphorylated by MAPK8, MAPK9 and MAPK10. Phosphorylation on Thr-103 is also necessary for the dissociation and activation of MAP3K12. Phosphorylated by isoform 1 and isoform 2 of VRK2. Hyperphosphorylated during mitosis following activation of stress-activated and MAP kinases. In terms of processing, ubiquitinated. Two preliminary events are required to prime for ubiquitination; phosphorylation and an increased in intracellular calcium concentration. Then, the calcium influx initiates ubiquitination and degradation by the ubiquitin-proteasome pathway. As to expression, highly expressed in brain. Expressed in neurons, localizing to neurite tips in differentiating cells. Also expressed in the pancreas, testis and prostate. Low levels in heart, ovary and small intestine. Decreased levels in pancreatic beta cells sensitize cells to IL-1-beta-induced apoptosis.

The protein localises to the cytoplasm. The protein resides in the perinuclear region. Its subcellular location is the nucleus. It is found in the endoplasmic reticulum membrane. It localises to the mitochondrion membrane. In terms of biological role, the JNK-interacting protein (JIP) group of scaffold proteins selectively mediates JNK signaling by aggregating specific components of the MAPK cascade to form a functional JNK signaling module. Required for JNK activation in response to excitotoxic stress. Cytoplasmic MAPK8IP1 causes inhibition of JNK-regulated activity by retaining JNK in the cytoplasm and inhibiting JNK phosphorylation of c-Jun. May also participate in ApoER2-specific reelin signaling. Directly, or indirectly, regulates GLUT2 gene expression and beta-cell function. Appears to have a role in cell signaling in mature and developing nerve terminals. May function as a regulator of vesicle transport, through interactions with the JNK-signaling components and motor proteins. Functions as an anti-apoptotic protein and whose level seems to influence the beta-cell death or survival response. Acts as a scaffold protein that coordinates with SH3RF1 in organizing different components of the JNK pathway, including RAC1 or RAC2, MAP3K11/MLK3 or MAP3K7/TAK1, MAP2K7/MKK7, MAPK8/JNK1 and/or MAPK9/JNK2 into a functional multiprotein complex to ensure the effective activation of the JNK signaling pathway. Regulates the activation of MAPK8/JNK1 and differentiation of CD8(+) T-cells. The polypeptide is C-Jun-amino-terminal kinase-interacting protein 1 (MAPK8IP1) (Homo sapiens (Human)).